A 209-amino-acid polypeptide reads, in one-letter code: Ubiquitin-conjugating enzyme E2 S (209 aa).

One can recognise a UBC core domain in the interval 14–160; that stretch reads QTIRQVMREL…ARMMTEIHAQ (147 aa). C98 acts as the Glycyl thioester intermediate in catalysis. The interval 165-194 is disordered; sequence GVGAASDAKDDDGPSTKKHAGLDKKLQDKK. The span at 171 to 194 shows a compositional bias: basic and acidic residues; that stretch reads DAKDDDGPSTKKHAGLDKKLQDKK.

Belongs to the ubiquitin-conjugating enzyme family.

It catalyses the reaction S-ubiquitinyl-[E1 ubiquitin-activating enzyme]-L-cysteine + [E2 ubiquitin-conjugating enzyme]-L-cysteine = [E1 ubiquitin-activating enzyme]-L-cysteine + S-ubiquitinyl-[E2 ubiquitin-conjugating enzyme]-L-cysteine.. It participates in protein modification; protein ubiquitination. In terms of biological role, catalyzes the covalent attachment of ubiquitin to other proteins. Acts as an essential factor of the anaphase promoting complex/cyclosome (APC/C), a cell cycle-regulated ubiquitin ligase that controls progression through mitosis. Acts by specifically elongating polyubiquitin chains initiated by the E2 enzyme vih/UbcH10 on APC/C substrates, enhancing the degradation of APC/C substrates by the proteasome and promoting mitotic exit. The protein is Ubiquitin-conjugating enzyme E2 S of Drosophila persimilis (Fruit fly).